The following is a 348-amino-acid chain: MITLAVESMGGDQGLAVTVPGATAFLQAHPDVRLIMTGDETQLRQALNAAGAPMERIDICHTTQVVGMDESPQSALKNKKYSSMRVAINQVKEGKAQAAVSAGNTGALMATARFVLKTIPGIERPAIAKFLPSDTDHVTLALDLGANVDCTPEQLAQFAVIGSELVHALHPQKGQPRVGLVNVGTEDIKGTDTVKQTYKLLQNSKLNFIGNIESNGILYGEADVVVADGFVGNVMLKTIEGAVKFMSGAIRREFQSNLFNKLAAVAALPALKGLKNKLDPRKFNGAILLGLRGIVIKSHGGTDKTGFRYALEEAYHEAKSAGLSKIEQGVAEQLAALEAAQNETAASL.

This sequence belongs to the PlsX family. As to quaternary structure, homodimer. Probably interacts with PlsY.

It localises to the cytoplasm. It catalyses the reaction a fatty acyl-[ACP] + phosphate = an acyl phosphate + holo-[ACP]. It functions in the pathway lipid metabolism; phospholipid metabolism. Catalyzes the reversible formation of acyl-phosphate (acyl-PO(4)) from acyl-[acyl-carrier-protein] (acyl-ACP). This enzyme utilizes acyl-ACP as fatty acyl donor, but not acyl-CoA. The sequence is that of Phosphate acyltransferase from Neisseria gonorrhoeae (strain ATCC 700825 / FA 1090).